The primary structure comprises 396 residues: Tryptophan synthase beta chain (396 aa).

K88 is modified (N6-(pyridoxal phosphate)lysine).

Belongs to the TrpB family. In terms of assembly, tetramer of two alpha and two beta chains. Pyridoxal 5'-phosphate is required as a cofactor.

It catalyses the reaction (1S,2R)-1-C-(indol-3-yl)glycerol 3-phosphate + L-serine = D-glyceraldehyde 3-phosphate + L-tryptophan + H2O. The protein operates within amino-acid biosynthesis; L-tryptophan biosynthesis; L-tryptophan from chorismate: step 5/5. In terms of biological role, the beta subunit is responsible for the synthesis of L-tryptophan from indole and L-serine. This chain is Tryptophan synthase beta chain, found in Shewanella baltica (strain OS195).